The primary structure comprises 181 residues: Large ribosomal subunit protein uL16 (181 aa).

This sequence belongs to the universal ribosomal protein uL16 family.

This is Large ribosomal subunit protein uL16 from Pyrococcus horikoshii (strain ATCC 700860 / DSM 12428 / JCM 9974 / NBRC 100139 / OT-3).